Consider the following 275-residue polypeptide: Translation initiation factor 2 subunit alpha (275 aa).

One can recognise an S1 motif domain in the interval 12–83 (GELVVATVKR…KKGHIDLSLR (72 aa)).

It belongs to the eIF-2-alpha family. As to quaternary structure, heterotrimer composed of an alpha, a beta and a gamma chain.

Its function is as follows. eIF-2 functions in the early steps of protein synthesis by forming a ternary complex with GTP and initiator tRNA. The chain is Translation initiation factor 2 subunit alpha from Pyrococcus furiosus (strain ATCC 43587 / DSM 3638 / JCM 8422 / Vc1).